Consider the following 332-residue polypeptide: MDKVERRLYELYEKAINYEPLSKEEALYILEVDDIYVPFLVHLAQKIKKHYFPENEVEFCSIINAKSGACSEDCKFCAQSKYYKTPINVYNLVPVDEMVEGAIRGVEFGANRYCIVLSGKSATKEEVERITEAVKEIKNEGLPINVCVSAGTLDEESLKKLKEAGVKRINHNLETSRNFFKNIVTTHTWEDRYETIKRIKKVGLSTCSGGIFGMGESNEDRVDMALTYRELEVDSIPLNFLMPIEGTPMENAPGVEVMEALKIIAMFRFTNPKAELRLCGGREQNLRDFHGMATLMTNAMMVGGYLTRAGRDIKKDYQLLKDLKAKRKVSVE.

Positions 52–282 (FPENEVEFCS…KAELRLCGGR (231 aa)) constitute a Radical SAM core domain. [4Fe-4S] cluster is bound by residues C70, C74, and C77. Positions 114, 147, 207, and 277 each coordinate [2Fe-2S] cluster.

It belongs to the radical SAM superfamily. Biotin synthase family. In terms of assembly, homodimer. Requires [4Fe-4S] cluster as cofactor. [2Fe-2S] cluster is required as a cofactor.

It catalyses the reaction (4R,5S)-dethiobiotin + (sulfur carrier)-SH + 2 reduced [2Fe-2S]-[ferredoxin] + 2 S-adenosyl-L-methionine = (sulfur carrier)-H + biotin + 2 5'-deoxyadenosine + 2 L-methionine + 2 oxidized [2Fe-2S]-[ferredoxin]. Its pathway is cofactor biosynthesis; biotin biosynthesis; biotin from 7,8-diaminononanoate: step 2/2. Catalyzes the conversion of dethiobiotin (DTB) to biotin by the insertion of a sulfur atom into dethiobiotin via a radical-based mechanism. The protein is Biotin synthase of Aquifex aeolicus (strain VF5).